Consider the following 712-residue polypeptide: Polyribonucleotide nucleotidyltransferase (712 aa).

Positions 487 and 493 each coordinate Mg(2+). Residues 554-613 (PRIHTMKISVEKIKDVIGKGGAVIRQLTEETGTTIEIEDDGTIKIAATDGDQAKEAIRRI) enclose the KH domain. The S1 motif domain occupies 623–691 (GVIYTGKVAR…RQGRVRLSMK (69 aa)).

It belongs to the polyribonucleotide nucleotidyltransferase family. In terms of assembly, component of the RNA degradosome, which is a multiprotein complex involved in RNA processing and mRNA degradation. Requires Mg(2+) as cofactor.

Its subcellular location is the cytoplasm. The catalysed reaction is RNA(n+1) + phosphate = RNA(n) + a ribonucleoside 5'-diphosphate. Involved in mRNA degradation. Catalyzes the phosphorolysis of single-stranded polyribonucleotides processively in the 3'- to 5'-direction. This chain is Polyribonucleotide nucleotidyltransferase, found in Vibrio cholerae serotype O1 (strain ATCC 39541 / Classical Ogawa 395 / O395).